The primary structure comprises 121 residues: MSAVAEIIQTEMPAPFVFTDSAAAKVAELIAEEGNPDLKLRVFVQGGGCSGFQYGFTFDEITNEDDTTMTKNGVSLLIDAMSYQYLVGAEIDYKDDLEGAQFVIKNPNATSTCGCGSSFSA.

Iron-sulfur cluster is bound by residues Cys-49, Cys-113, and Cys-115.

This sequence belongs to the HesB/IscA family. As to quaternary structure, homodimer. Iron-sulfur cluster is required as a cofactor.

In terms of biological role, required for insertion of 4Fe-4S clusters. The chain is Putative iron-sulfur cluster insertion protein ErpA from Polaromonas sp. (strain JS666 / ATCC BAA-500).